A 300-amino-acid polypeptide reads, in one-letter code: Rhodopsin (300 aa).

Residues 1–18 (LHMIHLHWYQYPPMNPMM) lie on the Extracellular side of the membrane. Residues 19 to 43 (YPLLLVFMLITGILCLAGNFVTIWV) form a helical membrane-spanning segment. Residues 44–55 (FMNTKSLRTPAN) lie on the Cytoplasmic side of the membrane. The chain crosses the membrane as a helical span at residues 56-78 (LLVVNLAMSDFLMMFTMFPPMMV). Residues 79–92 (TCYYHTWTLGATFC) lie on the Extracellular side of the membrane. Residues C92 and C168 are joined by a disulfide bond. The chain crosses the membrane as a helical span at residues 93 to 115 (QVYAFLGNLCGCASIWTMVFITF). The 'Ionic lock' involved in activated form stabilization motif lies at 116–118 (DRY). Topologically, residues 116-134 (DRYNVIVKGVAGEPLSTKK) are cytoplasmic. A helical membrane pass occupies residues 135–155 (ASLWILTIWILSITWCIAPFF). Over 156–181 (GWNRYVPEGNTGCGTDYLSEDILSRS) the chain is Extracellular. A helical membrane pass occupies residues 182–203 (YLYIYSTWVYFLPLAITIYCHV). The Cytoplasmic segment spans residues 204–244 (FIIKAVAAHEKGMRDQAKKMGIKSLRNEEAQKTSAECRLAK). The chain crosses the membrane as a helical span at residues 245 to 266 (IAMTTVALWFIAWTPYLLINWV). Residues 267-277 (GMFARSYLSPV) lie on the Extracellular side of the membrane. A helical transmembrane segment spans residues 278 to 299 (YTIWGYVFAKANAVYNPIVYAI). N6-(retinylidene)lysine is present on K287.

This sequence belongs to the G-protein coupled receptor 1 family. Opsin subfamily. In terms of assembly, homodimer. Interacts with GNAQ. Post-translationally, contains one covalently linked retinal chromophore.

The protein resides in the cell projection. It is found in the rhabdomere membrane. Its function is as follows. Photoreceptor required for image-forming vision at low light intensity. Can use both retinal and 3-dehydroretinal as visual pigment. Light-induced isomerization of 11-cis to all-trans retinal triggers a conformational change that activates signaling via G-proteins. Signaling via GNAQ probably mediates the activation of phospholipase C. The chain is Rhodopsin (RHO) from Cambarus maculatus (Freckled crayfish).